The chain runs to 382 residues: Methylthioribose-1-phosphate isomerase (382 aa).

Catalysis depends on D261, which acts as the Proton donor.

This sequence belongs to the eIF-2B alpha/beta/delta subunits family. MtnA subfamily.

It is found in the cytoplasm. The protein resides in the nucleus. It carries out the reaction 5-(methylsulfanyl)-alpha-D-ribose 1-phosphate = 5-(methylsulfanyl)-D-ribulose 1-phosphate. Its pathway is amino-acid biosynthesis; L-methionine biosynthesis via salvage pathway; L-methionine from S-methyl-5-thio-alpha-D-ribose 1-phosphate: step 1/6. Functionally, catalyzes the interconversion of methylthioribose-1-phosphate (MTR-1-P) into methylthioribulose-1-phosphate (MTRu-1-P). The protein is Methylthioribose-1-phosphate isomerase of Ricinus communis (Castor bean).